Reading from the N-terminus, the 557-residue chain is Glucose-6-phosphate isomerase (557 aa).

The active-site Proton donor is the glutamate 359. Catalysis depends on residues histidine 390 and lysine 518.

This sequence belongs to the GPI family.

It is found in the cytoplasm. The enzyme catalyses alpha-D-glucose 6-phosphate = beta-D-fructose 6-phosphate. The protein operates within carbohydrate biosynthesis; gluconeogenesis. It functions in the pathway carbohydrate degradation; glycolysis; D-glyceraldehyde 3-phosphate and glycerone phosphate from D-glucose: step 2/4. In terms of biological role, catalyzes the reversible isomerization of glucose-6-phosphate to fructose-6-phosphate. In Hahella chejuensis (strain KCTC 2396), this protein is Glucose-6-phosphate isomerase.